A 177-amino-acid polypeptide reads, in one-letter code: SPbeta prophage-derived uncharacterized N-acetyltransferase YokL (177 aa).

The N-acetyltransferase domain maps to 11-170 (LTLRAIQPED…DGICFGMTRE (160 aa)).

It belongs to the acetyltransferase family.

This is SPbeta prophage-derived uncharacterized N-acetyltransferase YokL (yokL) from Bacillus subtilis (strain 168).